A 95-amino-acid chain; its full sequence is Large ribosomal subunit protein eL31 (95 aa).

This sequence belongs to the eukaryotic ribosomal protein eL31 family. As to quaternary structure, part of the 50S ribosomal subunit.

The chain is Large ribosomal subunit protein eL31 from Pyrococcus furiosus (strain ATCC 43587 / DSM 3638 / JCM 8422 / Vc1).